The primary structure comprises 229 residues: Ras-like protein rasV (229 aa).

Residue 40-47 participates in GTP binding; sequence GDGGVGKT. Positions 62-70 match the Effector region motif; the sequence is YDPTIEDSY. GTP contacts are provided by residues 87-91 and 146-149; these read DTAGQ and NKSD. Cysteine 226 carries the cysteine methyl ester modification. Cysteine 226 is lipidated: S-geranylgeranyl cysteine. Residues 227 to 229 constitute a propeptide, removed in mature form; that stretch reads KVM.

The protein belongs to the small GTPase superfamily. Ras family.

The protein resides in the cell membrane. It catalyses the reaction GTP + H2O = GDP + phosphate + H(+). Ras proteins bind GDP/GTP and possess intrinsic GTPase activity. This is Ras-like protein rasV (rasV) from Dictyostelium discoideum (Social amoeba).